A 432-amino-acid polypeptide reads, in one-letter code: Putative cyclin-F1-4 (432 aa).

Belongs to the cyclin family. Cyclin F subfamily.

This is Putative cyclin-F1-4 (CycF1-4) from Oryza sativa subsp. japonica (Rice).